The sequence spans 432 residues: Enolase (432 aa).

Residue Gln167 coordinates (2R)-2-phosphoglycerate. Glu209 functions as the Proton donor in the catalytic mechanism. Residues Asp246, Glu290, and Asp317 each contribute to the Mg(2+) site. Residues Lys342, Arg371, Ser372, and Lys393 each coordinate (2R)-2-phosphoglycerate. The active-site Proton acceptor is Lys342.

The protein belongs to the enolase family. In terms of assembly, component of the RNA degradosome, a multiprotein complex involved in RNA processing and mRNA degradation. Mg(2+) is required as a cofactor.

It is found in the cytoplasm. It localises to the secreted. The protein resides in the cell surface. The catalysed reaction is (2R)-2-phosphoglycerate = phosphoenolpyruvate + H2O. The protein operates within carbohydrate degradation; glycolysis; pyruvate from D-glyceraldehyde 3-phosphate: step 4/5. Its function is as follows. Catalyzes the reversible conversion of 2-phosphoglycerate (2-PG) into phosphoenolpyruvate (PEP). It is essential for the degradation of carbohydrates via glycolysis. The sequence is that of Enolase from Klebsiella pneumoniae subsp. pneumoniae (strain ATCC 700721 / MGH 78578).